The following is a 566-amino-acid chain: MWLRALVLATLAAFTAWGHPSSPPVVDTVHGKVLGKFVSLEGFTQPVAVFLGIPFAKPPLGPLRFTPPQPAEPWSFVKNATSYPPMCSQDAVAGQVLSELFTNRKENTPLKLSEDCLYLNIYTPADLTKKNRLPVMVWIHGGGLVVGAASTYDGLALAAHENVVVVTIQYRLGIWGFFSTGDEHSRGNWGHLDQLAALRWVQDNIASFGGNPGSVTIFGESAGGESVSVLVLSPLAKNLFHRAISESGVALTAVLVKKGDVKPLAEQIAIAAGCQTTTSAVMVHCLRQKTEEELLETTLKMKFFSLDLHGDPRESHPFLGTVIDGLLLPKTPEELQAERKFNTVPYMVGFNKQEFGWIIPMLMGYPLSEGKLDQKTAMSLLWKSYPLVYIAKELIPEATEKYLGGTDDPVKKKDRFLDLLADVMFSVPSVIVARHHRDAGVPTYMYEFQYRPSFSSDMKPKTVIGDHGDELFSVFGAPFLKEGASEEEIRLSKMVMKFWANFARNGNPNGEGLPRWPEYNQEEGYLQIGANTQAAQKLKDKEVAFWTTLFAKKAVEKPPQTEHIEL.

The first 18 residues, 1 to 18, serve as a signal peptide directing secretion; sequence MWLRALVLATLAAFTAWG. N79 is a glycosylation site (N-linked (GlcNAc...) asparagine). Cysteines 87 and 116 form a disulfide. The active-site Acyl-ester intermediate is S221. An intrachain disulfide couples C274 to C285. Residue E354 is the Charge relay system of the active site. S379 carries the post-translational modification Phosphoserine. Catalysis depends on H467, which acts as the Charge relay system.

This sequence belongs to the type-B carboxylesterase/lipase family. In terms of assembly, homotrimer and homohexamer. Binds to beta-glucuronidase.

Its subcellular location is the endoplasmic reticulum lumen. The protein localises to the cytoplasm. It localises to the lipid droplet. The catalysed reaction is a carboxylic ester + H2O = an alcohol + a carboxylate + H(+). The enzyme catalyses cholesteryl (9Z-octadecenoate) + H2O = cholesterol + (9Z)-octadecenoate + H(+). It carries out the reaction 2-(5Z,8Z,11Z,14Z-eicosatetraenoyl)-glycerol + H2O = glycerol + (5Z,8Z,11Z,14Z)-eicosatetraenoate + H(+). It catalyses the reaction prostaglandin E2 1-glyceryl ester + H2O = prostaglandin E2 + glycerol + H(+). The catalysed reaction is a cholesterol ester + H2O = cholesterol + a fatty acid + H(+). The enzyme catalyses prostaglandin F2alpha 1-glyceryl ester + H2O = prostaglandin F2alpha + glycerol + H(+). In terms of biological role, involved in the detoxification of xenobiotics and in the activation of ester and amide prodrugs. Hydrolyzes aromatic and aliphatic esters, but has no catalytic activity toward amides or a fatty acyl-CoA ester. Displays fatty acid ethyl ester synthase activity, catalyzing the ethyl esterification of oleic acid to ethyloleate. Converts monoacylglycerides to free fatty acids and glycerol. Hydrolyzes of 2-arachidonoylglycerol and prostaglandins. Hydrolyzes cellular cholesteryl esters to free cholesterols and promotes reverse cholesterol transport (RCT) by facilitating both the initial and final steps in the process. First of all, allows free cholesterol efflux from macrophages to extracellular cholesterol acceptors and secondly, releases free cholesterol from lipoprotein-delivered cholesteryl esters in the liver for bile acid synthesis or direct secretion into the bile. The polypeptide is Liver carboxylesterase 1 (Macaca fascicularis (Crab-eating macaque)).